A 217-amino-acid polypeptide reads, in one-letter code: Large ribosomal subunit protein uL4c (217 aa).

The interval 51–85 (HRNRNAHTQTRGEVSGGGRKPWKQKGTGRARAGSN) is disordered.

Belongs to the universal ribosomal protein uL4 family. As to quaternary structure, part of the 50S ribosomal subunit.

Its subcellular location is the plastid. It localises to the chloroplast. In terms of biological role, probably binds the 23S rRNA. The sequence is that of Large ribosomal subunit protein uL4c (rpl4) from Gracilaria tenuistipitata var. liui (Red alga).